The chain runs to 254 residues: Alcohol dehydrogenase (254 aa).

F10 to L33 lines the NAD(+) pocket. Position 138 (S138) interacts with substrate. Residue Y151 is the Proton acceptor of the active site.

The protein belongs to the short-chain dehydrogenases/reductases (SDR) family. Homodimer.

It catalyses the reaction a primary alcohol + NAD(+) = an aldehyde + NADH + H(+). It carries out the reaction a secondary alcohol + NAD(+) = a ketone + NADH + H(+). The sequence is that of Alcohol dehydrogenase (Adh) from Drosophila hawaiiensis (Fruit fly).